An 83-amino-acid chain; its full sequence is MAKEELIEMQGSVTEVLPDSRFRVTLDNGHQLIAYTGGKMRKHHIRILAGDKVSLEMSPYDLSKGRITFRHLAGRGPGPSSSR.

The S1-like domain occupies methionine 1 to leucine 72.

This sequence belongs to the IF-1 family. In terms of assembly, component of the 30S ribosomal translation pre-initiation complex which assembles on the 30S ribosome in the order IF-2 and IF-3, IF-1 and N-formylmethionyl-tRNA(fMet); mRNA recruitment can occur at any time during PIC assembly.

It localises to the cytoplasm. Functionally, one of the essential components for the initiation of protein synthesis. Stabilizes the binding of IF-2 and IF-3 on the 30S subunit to which N-formylmethionyl-tRNA(fMet) subsequently binds. Helps modulate mRNA selection, yielding the 30S pre-initiation complex (PIC). Upon addition of the 50S ribosomal subunit IF-1, IF-2 and IF-3 are released leaving the mature 70S translation initiation complex. The polypeptide is Translation initiation factor IF-1 (Verminephrobacter eiseniae (strain EF01-2)).